Here is a 314-residue protein sequence, read N- to C-terminus: Aspartate carbamoyltransferase catalytic subunit (314 aa).

Arg-55 and Thr-56 together coordinate carbamoyl phosphate. Residue Lys-83 coordinates L-aspartate. Arg-105, His-139, and Gln-142 together coordinate carbamoyl phosphate. L-aspartate-binding residues include Arg-172 and Arg-226. 2 residues coordinate carbamoyl phosphate: Gly-267 and Pro-268.

This sequence belongs to the aspartate/ornithine carbamoyltransferase superfamily. ATCase family. As to quaternary structure, heterododecamer (2C3:3R2) of six catalytic PyrB chains organized as two trimers (C3), and six regulatory PyrI chains organized as three dimers (R2).

It catalyses the reaction carbamoyl phosphate + L-aspartate = N-carbamoyl-L-aspartate + phosphate + H(+). It functions in the pathway pyrimidine metabolism; UMP biosynthesis via de novo pathway; (S)-dihydroorotate from bicarbonate: step 2/3. Its function is as follows. Catalyzes the condensation of carbamoyl phosphate and aspartate to form carbamoyl aspartate and inorganic phosphate, the committed step in the de novo pyrimidine nucleotide biosynthesis pathway. The protein is Aspartate carbamoyltransferase catalytic subunit of Rhodococcus erythropolis (strain PR4 / NBRC 100887).